We begin with the raw amino-acid sequence, 269 residues long: Formamidopyrimidine-DNA glycosylase (269 aa).

P2 serves as the catalytic Schiff-base intermediate with DNA. Catalysis depends on E3, which acts as the Proton donor. The active-site Proton donor; for beta-elimination activity is the K57. The DNA site is built by H90, R109, and K150. The segment at 235–269 (QVYGRKGEPCRVCGTPIVATKHAQRATFYCRQCQK) adopts an FPG-type zinc-finger fold. The active-site Proton donor; for delta-elimination activity is R259.

It belongs to the FPG family. Monomer. The cofactor is Zn(2+).

The enzyme catalyses Hydrolysis of DNA containing ring-opened 7-methylguanine residues, releasing 2,6-diamino-4-hydroxy-5-(N-methyl)formamidopyrimidine.. It catalyses the reaction 2'-deoxyribonucleotide-(2'-deoxyribose 5'-phosphate)-2'-deoxyribonucleotide-DNA = a 3'-end 2'-deoxyribonucleotide-(2,3-dehydro-2,3-deoxyribose 5'-phosphate)-DNA + a 5'-end 5'-phospho-2'-deoxyribonucleoside-DNA + H(+). Involved in base excision repair of DNA damaged by oxidation or by mutagenic agents. Acts as a DNA glycosylase that recognizes and removes damaged bases. Has a preference for oxidized purines, such as 7,8-dihydro-8-oxoguanine (8-oxoG). Has AP (apurinic/apyrimidinic) lyase activity and introduces nicks in the DNA strand. Cleaves the DNA backbone by beta-delta elimination to generate a single-strand break at the site of the removed base with both 3'- and 5'-phosphates. The protein is Formamidopyrimidine-DNA glycosylase of Escherichia coli (strain 55989 / EAEC).